The primary structure comprises 348 residues: D-alanine--D-alanine ligase (348 aa).

The ATP-grasp domain occupies 132 to 334 (KRVLESADIP…YAELIEELVR (203 aa)). Residue 162 to 217 (EAVLSYPVFVKPANMGSSVGISKAESEEELRAAILLALTYDSRILIEQGVLAREIE) coordinates ATP. D288, E301, and N303 together coordinate Mg(2+).

This sequence belongs to the D-alanine--D-alanine ligase family. It depends on Mg(2+) as a cofactor. The cofactor is Mn(2+).

It localises to the cytoplasm. It carries out the reaction 2 D-alanine + ATP = D-alanyl-D-alanine + ADP + phosphate + H(+). Its pathway is cell wall biogenesis; peptidoglycan biosynthesis. Its function is as follows. Cell wall formation. This chain is D-alanine--D-alanine ligase, found in Streptococcus equi subsp. zooepidemicus (strain MGCS10565).